A 303-amino-acid chain; its full sequence is Pseudouridine-5'-phosphate glycosidase (303 aa).

E23 acts as the Proton donor in catalysis. Positions 85 and 105 each coordinate substrate. Residue D137 participates in Mn(2+) binding. A substrate-binding site is contributed by 139–141; the sequence is SQD. Residue K158 is the Nucleophile of the active site.

This sequence belongs to the pseudouridine-5'-phosphate glycosidase family. As to quaternary structure, homotrimer. It depends on Mn(2+) as a cofactor.

It carries out the reaction D-ribose 5-phosphate + uracil = psi-UMP + H2O. Functionally, catalyzes the reversible cleavage of pseudouridine 5'-phosphate (PsiMP) to ribose 5-phosphate and uracil. Functions biologically in the cleavage direction, as part of a pseudouridine degradation pathway. This chain is Pseudouridine-5'-phosphate glycosidase, found in Myxococcus xanthus (strain DK1622).